The sequence spans 45 residues: Non-specific lipid-transfer protein (45 aa).

It belongs to the plant LTP family. In terms of tissue distribution, expressed in pollen.

Its function is as follows. Plant non-specific lipid-transfer proteins transfer phospholipids as well as galactolipids across membranes. May play a role in wax or cutin deposition in the cell walls of expanding epidermal cells and certain secretory tissues. The polypeptide is Non-specific lipid-transfer protein (Broussonetia papyrifera (Paper mulberry)).